Consider the following 251-residue polypeptide: MAKAAVTKRHHFMIQKLLILLSYGYTNGLDDAHSLRCNLTIKDPTSADLPWCDVKCSVDEITILHLNNINKTMTSGDPGKMANATGKCLTQPLNDLCQELRDKVSNTKVDTHKTNGYPHLQVTMIYPQSQGQTPSATWEFNISDSYFFTFYTENMSWRSANDESGVIMNKWKDDGDLVQQLKYFIPQCRQKIDEFLKQSKEKPRSTSRSPSITQLTSTSPLPPPSHSTSKKGFISVGLIFISLLFAFAFAM.

The first 28 residues, 1–28, serve as a signal peptide directing secretion; it reads MAKAAVTKRHHFMIQKLLILLSYGYTNG. The cysteines at positions 37 and 56 are disulfide-linked. N-linked (GlcNAc...) asparagine glycans are attached at residues Asn38, Asn70, Asn83, Asn141, and Asn154. The cysteines at positions 88 and 188 are disulfide-linked. Residues 196 to 228 are disordered; sequence LKQSKEKPRSTSRSPSITQLTSTSPLPPPSHST. Low complexity predominate over residues 209–219; sequence SPSITQLTSTS. Ser225 is lipidated: GPI-anchor amidated serine. Residues 226–251 constitute a propeptide, removed in mature form; sequence HSTSKKGFISVGLIFISLLFAFAFAM.

It belongs to the NKG2D ligand family. In terms of processing, glycosylated.

It localises to the cell membrane. Functionally, acts as a ligand for KLRK1. This is Retinoic acid early-inducible protein 1-epsilon (Raet1e) from Mus musculus (Mouse).